The following is a 760-amino-acid chain: Transferrin receptor protein 1 (760 aa).

At Met-1–Ser-65 the chain is on the cytoplasmic side. Residues Met-1–Cys-67 form a mediates interaction with SH3BP4 region. Phosphoserine occurs at positions 10 and 19. Tyr-20 bears the Phosphotyrosine mark. Residues Tyr-20 to Phe-23 carry the Endocytosis signal motif. Position 21 is a phosphothreonine (Thr-21). The residue at position 24 (Ser-24) is a Phosphoserine. Positions Lys-58–Arg-61 match the Stop-transfer sequence motif. S-palmitoyl cysteine attachment occurs at residues Cys-62 and Cys-67. A helical; Signal-anchor for type II membrane protein membrane pass occupies residues Ile-66–Leu-86. Residues Gly-87–Phe-760 lie on the Extracellular side of the membrane. The 91-residue stretch at Ser-223–Phe-313 folds into the PA domain. Residues Asn-251 and Asn-317 are each glycosylated (N-linked (GlcNAc...) asparagine). Residues Thr-569–Phe-760 are ligand-binding. The short motif at Arg-646–Asp-648 is the Cell attachment site element. Asn-722 and Asn-727 each carry an N-linked (GlcNAc...) asparagine glycan.

Belongs to the peptidase M28 family. M28B subfamily. As to quaternary structure, homodimer; disulfide-linked. Binds one transferrin or HFE molecule per subunit. Interacts with SH3BP4. Interacts with STEAP3; facilitates TFRC endocytosis in erythroid precursor cells. In terms of processing, stearoylated by ZDHHC6 which inhibits TFRC-mediated activation of the JNK pathway and promotes mitochondrial fragmentation. Stearoylation does not affect iron uptake.

Its subcellular location is the cell membrane. The protein resides in the melanosome. In terms of biological role, cellular uptake of iron occurs via receptor-mediated endocytosis of ligand-occupied transferrin receptor into specialized endosomes. Endosomal acidification leads to iron release. The apotransferrin-receptor complex is then recycled to the cell surface with a return to neutral pH and the concomitant loss of affinity of apotransferrin for its receptor. Transferrin receptor is necessary for development of erythrocytes and the nervous system. Positively regulates T and B cell proliferation through iron uptake. Acts as a lipid sensor that regulates mitochondrial fusion by regulating activation of the JNK pathway. When dietary levels of stearate (C18:0) are low, promotes activation of the JNK pathway, resulting in HUWE1-mediated ubiquitination and subsequent degradation of the mitofusin MFN2 and inhibition of mitochondrial fusion. When dietary levels of stearate (C18:0) are high, TFRC stearoylation inhibits activation of the JNK pathway and thus degradation of the mitofusin MFN2. Mediates uptake of NICOL1 into fibroblasts where it may regulate extracellular matrix production. This chain is Transferrin receptor protein 1 (TFRC), found in Pongo abelii (Sumatran orangutan).